Consider the following 360-residue polypeptide: ELAV-like protein 2 (360 aa).

The segment at 1-36 (METQLSNGPTCNNTANGPTTVNNNCSSPVDSGNTED) is disordered. 2 consecutive RRM domains span residues 39-117 (TNLI…YARP) and 125-205 (ANLY…FANN). Position 221 is a phosphoserine (S221). An RRM 3 domain is found at 277 to 355 (WCIFVYNLAP…RVLQVSFKTN (79 aa)).

This sequence belongs to the RRM elav family. In terms of assembly, interacts with IGF2BP1. Interacts with MAP1B light chain LC1. Brain; neural-specific. Expressed in the hippocampus.

Functionally, RNA-binding protein that binds to the 3' untranslated region (3'UTR) of target mRNAs. Seems to recognize a GAAA motif. Can bind to its own 3'UTR, the FOS 3'UTR and the ID 3'UTR. In Mus musculus (Mouse), this protein is ELAV-like protein 2 (Elavl2).